A 278-amino-acid polypeptide reads, in one-letter code: Elongation factor Ts (278 aa).

The segment at 82–85 (TDFV) is involved in Mg(2+) ion dislocation from EF-Tu.

It belongs to the EF-Ts family.

It is found in the cytoplasm. Associates with the EF-Tu.GDP complex and induces the exchange of GDP to GTP. It remains bound to the aminoacyl-tRNA.EF-Tu.GTP complex up to the GTP hydrolysis stage on the ribosome. The sequence is that of Elongation factor Ts (tsf) from Streptomyces coelicolor (strain ATCC BAA-471 / A3(2) / M145).